The following is an 89-amino-acid chain: Small ribosomal subunit protein uS15 (89 aa).

Belongs to the universal ribosomal protein uS15 family. Part of the 30S ribosomal subunit. Forms a bridge to the 50S subunit in the 70S ribosome, contacting the 23S rRNA.

Its function is as follows. One of the primary rRNA binding proteins, it binds directly to 16S rRNA where it helps nucleate assembly of the platform of the 30S subunit by binding and bridging several RNA helices of the 16S rRNA. Functionally, forms an intersubunit bridge (bridge B4) with the 23S rRNA of the 50S subunit in the ribosome. This is Small ribosomal subunit protein uS15 from Blochmanniella pennsylvanica (strain BPEN).